A 290-amino-acid chain; its full sequence is Lysine export transcriptional regulatory protein LysG (290 aa).

The HTH lysR-type domain occupies 1 to 57 (MNPIQLDTLLSIIDEGSFEGASLALSISPSAVSQRVKALEHHVGRVLVSRTQPAKAT). The H-T-H motif DNA-binding region spans 18-37 (FEGASLALSISPSAVSQRVK).

This sequence belongs to the LysR transcriptional regulatory family.

Functionally, positively regulates the expression of the exporter LysE. Induction requires the presence of a coinducer, which is either intracellular L-lysine, L-arginine or L-citrulline. L-histidine also acts as a coinducer of lysE expression, but this amino acid is not exported by LysE. The lysEG system prevents bacteriostasis due to elevated L-lysine or L-arginine concentrations that arise during growth in the presence of peptides or in mutants possessing a deregulated biosynthesis pathway. This chain is Lysine export transcriptional regulatory protein LysG, found in Corynebacterium glutamicum (strain ATCC 13032 / DSM 20300 / JCM 1318 / BCRC 11384 / CCUG 27702 / LMG 3730 / NBRC 12168 / NCIMB 10025 / NRRL B-2784 / 534).